Reading from the N-terminus, the 256-residue chain is Geranylgeranylglyceryl phosphate synthase (256 aa).

Mg(2+) contacts are provided by aspartate 28 and serine 53. Sn-glycerol 1-phosphate is bound by residues 172-178, 203-204, and 225-226; these read YLEAGSG, GG, and GT.

It belongs to the GGGP/HepGP synthase family. Group II subfamily. It depends on Mg(2+) as a cofactor.

The protein localises to the cytoplasm. It catalyses the reaction sn-glycerol 1-phosphate + (2E,6E,10E)-geranylgeranyl diphosphate = sn-3-O-(geranylgeranyl)glycerol 1-phosphate + diphosphate. Its pathway is membrane lipid metabolism; glycerophospholipid metabolism. Its function is as follows. Prenyltransferase that catalyzes the transfer of the geranylgeranyl moiety of geranylgeranyl diphosphate (GGPP) to the C3 hydroxyl of sn-glycerol-1-phosphate (G1P). This reaction is the first ether-bond-formation step in the biosynthesis of archaeal membrane lipids. In Methanococcus maripaludis (strain C6 / ATCC BAA-1332), this protein is Geranylgeranylglyceryl phosphate synthase.